The sequence spans 169 residues: NADH-quinone oxidoreductase subunit I (169 aa).

4Fe-4S ferredoxin-type domains lie at 60 to 90 (LRRYPNGEERCIACKLCEVICPAQAIVIEAE) and 100 to 129 (TRYDIDMIKCIYCGLCQEACPVDAIVEGPN). [4Fe-4S] cluster contacts are provided by Cys70, Cys73, Cys76, Cys80, Cys109, Cys112, Cys115, and Cys119.

The protein belongs to the complex I 23 kDa subunit family. In terms of assembly, NDH-1 is composed of 14 different subunits. Subunits NuoA, H, J, K, L, M, N constitute the membrane sector of the complex. Requires [4Fe-4S] cluster as cofactor.

Its subcellular location is the cell membrane. It catalyses the reaction a quinone + NADH + 5 H(+)(in) = a quinol + NAD(+) + 4 H(+)(out). In terms of biological role, NDH-1 shuttles electrons from NADH, via FMN and iron-sulfur (Fe-S) centers, to quinones in the respiratory chain. The immediate electron acceptor for the enzyme in this species is believed to be ubiquinone. Couples the redox reaction to proton translocation (for every two electrons transferred, four hydrogen ions are translocated across the cytoplasmic membrane), and thus conserves the redox energy in a proton gradient. The sequence is that of NADH-quinone oxidoreductase subunit I from Wolbachia pipientis wMel.